The sequence spans 358 residues: Protein ocs (358 aa).

Belongs to the lysopine/nopaline/octopine/opine/vitopine dehydrogenases family.

The catalysed reaction is D-octopine + NAD(+) + H2O = L-arginine + pyruvate + NADH + H(+). The enzyme catalyses D-lysopine + NADP(+) + H2O = L-lysine + pyruvate + NADPH + H(+). Its function is as follows. Reductive condensation of pyruvate and arginine, lysine, histidine, or octopine to form octopine, lysopine, histopine, or octopinic acid, respectively. NADPH is the preferred cofactor, but NADH can also be used. The protein is Protein ocs (ocs) of Agrobacterium vitis (Rhizobium vitis).